A 139-amino-acid chain; its full sequence is Large ribosomal subunit protein uL16 (139 aa).

Over residues 1 to 11 (MLQPKRTKYRK) the composition is skewed to basic residues. The segment at 1–30 (MLQPKRTKYRKPFLQSHDKRKAHKGNKVSF) is disordered.

It belongs to the universal ribosomal protein uL16 family. Part of the 50S ribosomal subunit.

Its function is as follows. Binds 23S rRNA and is also seen to make contacts with the A and possibly P site tRNAs. The chain is Large ribosomal subunit protein uL16 from Mycoplasmopsis synoviae (strain 53) (Mycoplasma synoviae).